Reading from the N-terminus, the 364-residue chain is Tyrosine--tRNA ligase (364 aa).

L-tyrosine contacts are provided by Tyr-41, Tyr-167, Gln-171, Asp-174, and Gln-189. A 'KMSKS' region motif is present at residues 238–242 (KMSKS). Residue Lys-241 coordinates ATP.

Belongs to the class-I aminoacyl-tRNA synthetase family. TyrS type 4 subfamily. As to quaternary structure, homodimer.

It localises to the cytoplasm. The catalysed reaction is tRNA(Tyr) + L-tyrosine + ATP = L-tyrosyl-tRNA(Tyr) + AMP + diphosphate + H(+). Catalyzes the attachment of tyrosine to tRNA(Tyr) in a two-step reaction: tyrosine is first activated by ATP to form Tyr-AMP and then transferred to the acceptor end of tRNA(Tyr). This Sulfurisphaera tokodaii (strain DSM 16993 / JCM 10545 / NBRC 100140 / 7) (Sulfolobus tokodaii) protein is Tyrosine--tRNA ligase.